The following is an 82-amino-acid chain: MKVAIVFLSLLVLAFASESIEENREEFPVEESARCGDINAACKEDCDCCGYTTACDCYWSKSCKCREAAIVIYTAPKKKLTC.

The N-terminal stretch at 1 to 16 (MKVAIVFLSLLVLAFA) is a signal peptide. A propeptide spanning residues 17-34 (SESIEENREEFPVEESAR) is cleaved from the precursor. Disulfide bonds link cysteine 35-cysteine 49, cysteine 42-cysteine 55, cysteine 46-cysteine 82, cysteine 48-cysteine 65, and cysteine 57-cysteine 63.

This sequence belongs to the neurotoxin 03 (Tx2) family. 05 subfamily. In terms of tissue distribution, expressed by the venom gland.

It localises to the secreted. In terms of biological role, this neurotoxin binds at site 3 of insect voltage-activated sodium channels (Nav) and prolongs evoked axonal action potentials by a slowing down of sodium current inactivation. The toxin also inhibits glutamate uptake from rat brain synaptosomes. It reversibly inhibits the N-methyl-D-aspartate (NMDA)-subtype of ionotropic glutamate receptor (GRIN). In addition, the toxin shows antinociceptive effect in all rat pain models tested (inflammatory, neuropathic and nociceptive). The antinociceptive effect is partially blocked when selective antagonists of both mu- and delta-opioid receptors are administered, revealing that the antinociceptive effect of the toxin involves both opioid and cannabinoid endogenous systems. In vivo, it is highly toxic to house fly (Musca domestica), toxic to cockroach, but has no effect when intracerebroventricularly injected into mice. The polypeptide is Delta-ctenitoxin-Pn1a (Phoneutria nigriventer (Brazilian armed spider)).